Consider the following 528-residue polypeptide: UDP-glucuronosyltransferase 2A1 (528 aa).

The N-terminal stretch at Met-1–Gly-21 is a signal peptide. The Extracellular portion of the chain corresponds to Asn-22–Gly-494. N-linked (GlcNAc...) asparagine glycosylation occurs at Asn-49. Lys-135 carries the N6-succinyllysine modification. N-linked (GlcNAc...) asparagine glycosylation is present at Asn-314. The chain crosses the membrane as a helical span at residues Phe-495 to Phe-515. The Cytoplasmic portion of the chain corresponds to Gln-516–Asp-528.

It belongs to the UDP-glycosyltransferase family.

It is found in the membrane. The enzyme catalyses glucuronate acceptor + UDP-alpha-D-glucuronate = acceptor beta-D-glucuronoside + UDP + H(+). The catalysed reaction is 16beta,17beta-estriol + UDP-alpha-D-glucuronate = 16beta,17beta-estriol 16-O-(beta-D-glucuronate) + UDP + H(+). It carries out the reaction 16alpha,17alpha-estriol + UDP-alpha-D-glucuronate = 16alpha,17alpha-estriol 16-O-(beta-D-glucuronate) + UDP + H(+). It catalyses the reaction 17alpha-estradiol + UDP-alpha-D-glucuronate = 17alpha-estradiol 17-O-(beta-D-glucuronate) + UDP + H(+). The enzyme catalyses 17alpha-estradiol + UDP-alpha-D-glucuronate = 17alpha-estradiol 3-O-(beta-D-glucuronate) + UDP + H(+). The catalysed reaction is 17beta-estradiol + UDP-alpha-D-glucuronate = 17beta-estradiol 3-O-(beta-D-glucuronate) + UDP + H(+). It carries out the reaction 17beta-estradiol + UDP-alpha-D-glucuronate = 17beta-estradiol 17-O-(beta-D-glucuronate) + UDP + H(+). It catalyses the reaction testosterone + UDP-alpha-D-glucuronate = testosterone 17-O-(beta-D-glucuronate) + UDP + H(+). The enzyme catalyses epitestosterone + UDP-alpha-D-glucuronate = epitestosterone 17-O-(beta-D-glucuronate) + UDP + H(+). The catalysed reaction is lithocholate + UDP-alpha-D-glucuronate = lithocholoyl-3-O-(beta-D-glucuronate) + UDP + H(+). It carries out the reaction lithocholate + UDP-alpha-D-glucuronate = lithocholoyl-24-O-(beta-D-glucuronate) + UDP. It catalyses the reaction deoxycholate + UDP-alpha-D-glucuronate = deoxycholoyl-24-O-(beta-D-glucuronate) + UDP. The enzyme catalyses hyodeoxycholate + UDP-alpha-D-glucuronate = hyodeoxycholate 6-O-(beta-D-glucuronate) + UDP + H(+). The catalysed reaction is hyocholate + UDP-alpha-D-glucuronate = hyocholoyl-24-O-(beta-D-glucuronate) + UDP. UDP-glucuronosyltransferase (UGT) that catalyzes phase II biotransformation reactions in which lipophilic substrates are conjugated with glucuronic acid to increase the metabolite's water solubility, thereby facilitating excretion into either the urine or bile. Essential for the elimination and detoxification of drugs, xenobiotics and endogenous compounds. Catalyzes the glucuronidation of endogenous steroid hormones such as androgens (testosterones) and estrogens (estradiol and estriol). Contributes to bile acid (BA) detoxification by catalyzing the glucuronidation of BA substrates, which are natural detergents for dietary lipids absorption. Shows a high affinity to aliphatic odorants such as citronellol as well as olfactory tissue specificity, and therefore may be involved in olfaction. The polypeptide is UDP-glucuronosyltransferase 2A1 (Mus musculus (Mouse)).